Reading from the N-terminus, the 237-residue chain is Ribose-5-phosphate isomerase A (237 aa).

Residues 33–36 (TGST), 90–93 (DGAD), and 103–106 (KGGG) each bind substrate. The Proton acceptor role is filled by Glu112. Lys130 contacts substrate.

The protein belongs to the ribose 5-phosphate isomerase family. As to quaternary structure, homodimer.

It carries out the reaction aldehydo-D-ribose 5-phosphate = D-ribulose 5-phosphate. It participates in carbohydrate degradation; pentose phosphate pathway; D-ribose 5-phosphate from D-ribulose 5-phosphate (non-oxidative stage): step 1/1. Catalyzes the reversible conversion of ribose-5-phosphate to ribulose 5-phosphate. The sequence is that of Ribose-5-phosphate isomerase A from Trichodesmium erythraeum (strain IMS101).